The sequence spans 294 residues: Zinc finger protein CONSTANS-LIKE 3 (294 aa).

Positions 8, 11, 31, 36, 51, 54, 74, and 79 each coordinate Zn(2+). The B box-type 1; atypical zinc finger occupies 8–50 (CDSCKSTAATLFCRADAAFLCGDCDGKIHTANKLASRHERVWL). Residues 51 to 93 (CEVCEQAPAHVTCKADAAALCVTCDRDIHSANPLSRRHERVPI) form a B box-type 2; atypical zinc finger. The region spanning 229-271 (REARVLRYREKRKNRKFEKTIRYASRKAYAEMRPRIKGRFAKR) is the CCT domain.

Belongs to the CONSTANS family.

It localises to the nucleus. The sequence is that of Zinc finger protein CONSTANS-LIKE 3 (COL3) from Arabidopsis thaliana (Mouse-ear cress).